Reading from the N-terminus, the 97-residue chain is Small ribosomal subunit protein bS20 (97 aa).

The protein belongs to the bacterial ribosomal protein bS20 family.

Its function is as follows. Binds directly to 16S ribosomal RNA. In Synechocystis sp. (strain ATCC 27184 / PCC 6803 / Kazusa), this protein is Small ribosomal subunit protein bS20.